A 757-amino-acid chain; its full sequence is Glutathione biosynthesis bifunctional protein GshAB (757 aa).

Residues 1–337 (MNIQQIVKEK…LGRARLGEVA (337 aa)) are glutamate--cysteine ligase. Residues 494–757 (KKVLAKAGFN…VLGMLFPELV (264 aa)) enclose the ATP-grasp domain. Residue 521–580 (PLFEGKAVVIKPKSTNFGLGISIFQQGVHDKADFAKAVEIAFREDKEVMVEDYLVGTEYR) participates in ATP binding. Residues D702, E723, and N725 each contribute to the Mg(2+) site. D702, E723, and N725 together coordinate Mn(2+).

In the N-terminal section; belongs to the glutamate--cysteine ligase type 1 family. Type 2 subfamily. Monomer. It depends on Mg(2+) as a cofactor. Requires Mn(2+) as cofactor.

It catalyses the reaction L-cysteine + L-glutamate + ATP = gamma-L-glutamyl-L-cysteine + ADP + phosphate + H(+). It carries out the reaction gamma-L-glutamyl-L-cysteine + glycine + ATP = glutathione + ADP + phosphate + H(+). The protein operates within sulfur metabolism; glutathione biosynthesis; glutathione from L-cysteine and L-glutamate: step 1/2. Its pathway is sulfur metabolism; glutathione biosynthesis; glutathione from L-cysteine and L-glutamate: step 2/2. Functionally, synthesizes glutathione from L-glutamate and L-cysteine via gamma-L-glutamyl-L-cysteine. The polypeptide is Glutathione biosynthesis bifunctional protein GshAB (Mannheimia succiniciproducens (strain KCTC 0769BP / MBEL55E)).